Consider the following 543-residue polypeptide: CTP synthase (543 aa).

The interval methionine 1 to leucine 265 is amidoligase domain. A CTP-binding site is contributed by serine 13. Serine 13 is a binding site for UTP. ATP-binding positions include serine 14–isoleucine 19 and aspartate 71. Residues aspartate 71 and glutamate 139 each coordinate Mg(2+). Residues aspartate 146–glutamate 148, lysine 186–glutamine 191, and lysine 222 each bind CTP. Residues lysine 186–glutamine 191 and lysine 222 each bind UTP. Residues threonine 290–lysine 541 form the Glutamine amidotransferase type-1 domain. Glycine 351 is an L-glutamine binding site. Residue cysteine 378 is the Nucleophile; for glutamine hydrolysis of the active site. Residues leucine 379–glutamine 382, glutamate 402, and arginine 469 each bind L-glutamine. Residues histidine 514 and glutamate 516 contribute to the active site.

This sequence belongs to the CTP synthase family. In terms of assembly, homotetramer.

The catalysed reaction is UTP + L-glutamine + ATP + H2O = CTP + L-glutamate + ADP + phosphate + 2 H(+). The enzyme catalyses L-glutamine + H2O = L-glutamate + NH4(+). It carries out the reaction UTP + NH4(+) + ATP = CTP + ADP + phosphate + 2 H(+). Its pathway is pyrimidine metabolism; CTP biosynthesis via de novo pathway; CTP from UDP: step 2/2. Allosterically activated by GTP, when glutamine is the substrate; GTP has no effect on the reaction when ammonia is the substrate. The allosteric effector GTP functions by stabilizing the protein conformation that binds the tetrahedral intermediate(s) formed during glutamine hydrolysis. Inhibited by the product CTP, via allosteric rather than competitive inhibition. In terms of biological role, catalyzes the ATP-dependent amination of UTP to CTP with either L-glutamine or ammonia as the source of nitrogen. Regulates intracellular CTP levels through interactions with the four ribonucleotide triphosphates. The polypeptide is CTP synthase (Pseudomonas syringae pv. tomato (strain ATCC BAA-871 / DC3000)).